Here is a 134-residue protein sequence, read N- to C-terminus: MEFKKVAKETAITLQSYLTYQAVRLISQQLSETNPGQAIWLGEFSKRHPIQESDLYLEAMMLENKELVLRILTVRENLAEGVLEFLPEMVLSQIKQSNGNHRRSLLERLTQVDSSSTDQTEPNPGESDTSEDSE.

A disordered region spans residues 97-134; sequence SNGNHRRSLLERLTQVDSSSTDQTEPNPGESDTSEDSE. Positions 111–122 are enriched in polar residues; the sequence is QVDSSSTDQTEP.

This sequence belongs to the RbcX family. In terms of assembly, homodimer (RbcX2). Interacts with the exposed C-terminal peptide of RbcL ('Glu-459-Asp-468'); binds 2 RbcL peptides per RbcX2, stapling them into an RbcL2 dimer. A slightly longer peptide binds with a higher affinity, but no long-term stable interaction with RbcL is detected. Contacts a second RbcL monomer via its peripheral polar surface.

It is found in the carboxysome. The protein localises to the cytoplasm. An RbcL-specific chaperone. Required for assembly of the RbcL8 core, acting downstream of the major chaperonin (GroEL-GroES). Acts on newly folded RbcL, has a transient dynamic interaction with RbcL and is eventually displaced by RbcS. The central cleft of the RbcX homodimer (RbcX2) binds the C-terminus of an RbcL monomer, stabilizing the C-terminus and probably preventing its reassociation with chaperonin GroEL-ES. At the same time the peripheral region of RbcX2 binds a second RbcL monomer, bridging the RbcL homodimers in the correct orientation. The RbcX2(2)-bound RbcL dimers then assemble into the RbcL8 core (RbcL8-(RbcX2)8). RbcS binding triggers the release of RbcX2. Required for optimal reconstitution of RuBisCO into its RbcL8S8 holoenzyme form upon expression of rbcL-rbcS subunits in E.coli, and probably also in situ. A frameshift mutation that replaces half the protein reduces accumulation of both RbcL and RbcS subunits and halves activity of RuBisCO in situ and in E.coli. The protein is RuBisCO chaperone RbcX of Picosynechococcus sp. (strain ATCC 27264 / PCC 7002 / PR-6) (Agmenellum quadruplicatum).